A 348-amino-acid polypeptide reads, in one-letter code: GMP reductase 2 (348 aa).

NADP(+) is bound by residues 26–27, K78, 129–131, and 180–181; these read SR, DVA, and IG. G181, G183, and C186 together coordinate K(+). C186 functions as the Thioimidate intermediate in the catalytic mechanism. The active-site Proton donor/acceptor is T188. R189 is a binding site for K(+). GMP-binding positions include 219–221, 242–243, 268–270, and 286–290; these read DGG, GG, GMS, and RASEG. NADP(+) is bound by residues M269 and 285-286; that span reads YR. K291 bears the N6-acetyllysine mark. 314–317 contributes to the NADP(+) binding site; it reads STCT.

The protein belongs to the IMPDH/GMPR family. GuaC type 1 subfamily. In terms of assembly, homotetramer.

The enzyme catalyses IMP + NH4(+) + NADP(+) = GMP + NADPH + 2 H(+). In terms of biological role, catalyzes the irreversible NADPH-dependent deamination of GMP to IMP. It functions in the conversion of nucleobase, nucleoside and nucleotide derivatives of G to A nucleotides, and in maintaining the intracellular balance of A and G nucleotides. Plays a role in modulating cellular differentiation. The chain is GMP reductase 2 from Mus musculus (Mouse).